Here is a 169-residue protein sequence, read N- to C-terminus: Interleukin-36 gamma (169 aa).

A propeptide spanning residues 1-17 (MRGTPGDADGGGRAVYQ) is cleaved from the precursor.

It belongs to the IL-1 family. As to quaternary structure, interacts with cargo receptor TMED10; the interaction mediates the translocation from the cytoplasm into the ERGIC (endoplasmic reticulum-Golgi intermediate compartment) and thereby secretion. N-terminal truncation leads to a dramatic enhancement of its activity (&gt;1000-fold). Proteolytically cleaved by cathepsin CTSG. As to expression, highly expressed in tissues containing epithelial cells: skin, lung, stomach and esophagus. Expressed in bronchial epithelial. In skin is expressed only in keratinocytes but not in fibroblasts, endothelial cells or melanocytes. Up-regulated in lesional psoriasis skin. Expressed in monocyte-derived dendritic cells and M1 macrophages.

The protein localises to the cytoplasm. It localises to the secreted. In terms of biological role, cytokine that binds to and signals through the IL1RL2/IL-36R receptor which in turn activates NF-kappa-B and MAPK signaling pathways in target cells. Part of the IL-36 signaling system that is thought to be present in epithelial barriers and to take part in local inflammatory response; similar to the IL-1 system with which it shares the coreceptor IL1RAP. Seems to be involved in skin inflammatory response by acting on keratinocytes, dendritic cells and indirectly on T-cells to drive tissue infiltration, cell maturation and cell proliferation. In cultured keratinocytes induces the expression of macrophage, T-cell, and neutrophil chemokines, such as CCL3, CCL4, CCL5, CCL2, CCL17, CCL22, CL20, CCL5, CCL2, CCL17, CCL22, CXCL8, CCL20 and CXCL1; also stimulates its own expression and that of the prototypic cutaneous pro-inflammatory parameters TNF-alpha, S100A7/psoriasin and inducible NOS. May play a role in pro-inflammatory responses during particular neutrophilic airway inflammation: activates mitogen-activated protein kinases and NF-kappa B in primary lung fibroblasts, and stimulates the expression of IL-8 and CXCL3 and Th17 chemokine CCL20 in lung fibroblasts. May be involved in the innate immune response to fungal pathogens, such as Aspergillus fumigatus. The sequence is that of Interleukin-36 gamma from Homo sapiens (Human).